Consider the following 256-residue polypeptide: Pimeloyl-[acyl-carrier protein] methyl ester esterase (256 aa).

Residues 15 to 242 (HLVLLHGWGL…AAHAPFISHP (228 aa)) enclose the AB hydrolase-1 domain. Residues Trp22, 82-83 (SL), and 143-147 (FLALQ) contribute to the substrate site. Catalysis depends on Ser82, which acts as the Nucleophile. Active-site residues include Asp207 and His235. A substrate-binding site is contributed by His235.

The protein belongs to the AB hydrolase superfamily. Carboxylesterase BioH family. Monomer.

Its subcellular location is the cytoplasm. The enzyme catalyses 6-carboxyhexanoyl-[ACP] methyl ester + H2O = 6-carboxyhexanoyl-[ACP] + methanol + H(+). Its pathway is cofactor biosynthesis; biotin biosynthesis. Functionally, the physiological role of BioH is to remove the methyl group introduced by BioC when the pimeloyl moiety is complete. It allows to synthesize pimeloyl-ACP via the fatty acid synthetic pathway through the hydrolysis of the ester bonds of pimeloyl-ACP esters. This is Pimeloyl-[acyl-carrier protein] methyl ester esterase from Citrobacter koseri (strain ATCC BAA-895 / CDC 4225-83 / SGSC4696).